The following is a 652-amino-acid chain: Gametogenetin (652 aa).

Disordered regions lie at residues 1–39, 52–237, 251–273, 291–473, and 488–576; these read MGNL…MTSQ, PGSA…DSES, PSLA…GGGG, QGPL…GHKE, and LAAD…GAAN. Composition is skewed to basic and acidic residues over residues 18–30 and 124–133; these read QPSD…RRTS and RLLEASHRGQ. The tract at residues 123–486 is interaction with GGNBP1; it reads RRLLEASHRG…APTAAPALPP (364 aa). Pro residues-rich tracts occupy residues 138–149 and 163–178; these read SLRPLKPPPPPR and QFPP…PPLP. Positions 201–212 are enriched in polar residues; that stretch reads ESQAGPRNQGQT. Low complexity-rich tracts occupy residues 213–230, 251–267, and 299–312; these read AGRA…GEMA, PSLA…AKAS, and ARPL…AQEA. S389 carries the phosphoserine modification. Low complexity predominate over residues 407–422; the sequence is APALLAPPTFIFPAPT. 2 stretches are compositionally biased toward pro residues: residues 428-466 and 495-513; these read RPGP…PPLT and APSP…PVSA. An interactions with ZNF403/GGNBP2 and OAZ3 region spans residues 491–652; that stretch reads DQAPAPSPAP…HYDLQATHSN (162 aa). Positions 523–532 are enriched in basic residues; that stretch reads TRTRRNKGSR. Over residues 538-552 the composition is skewed to basic and acidic residues; it reads TRKDGLHGDGPRERA.

In terms of assembly, interacts with FANCL, GGNBP1 and ZNF403/GGNBP2.

May be involved in spermatogenesis. This Homo sapiens (Human) protein is Gametogenetin (GGN).